Reading from the N-terminus, the 561-residue chain is Sesquiterpene synthase 1 (561 aa).

Residues aspartate 313, aspartate 317, aspartate 458, and glutamate 466 each contribute to the Mg(2+) site. Residues 313–317 carry the DDXXD motif motif; the sequence is DDIYD.

It belongs to the terpene synthase family. Tpsa subfamily. It depends on Mn(2+) as a cofactor. The cofactor is Mg(2+).

It localises to the cytoplasm. The catalysed reaction is (2E,6E)-farnesyl diphosphate = (1S,8aR)-delta-cadinene + diphosphate. Its pathway is secondary metabolite biosynthesis; terpenoid biosynthesis. Involved in the biosynthesis of delta-cadinene. The polypeptide is Sesquiterpene synthase 1 (STS1) (Thapsia garganica (Deadly carrot)).